Consider the following 121-residue polypeptide: Trypsin/alpha-amylase inhibitor CMX2 (121 aa).

The N-terminal stretch at 1-24 is a signal peptide; it reads MAFKHQLILSTAILLAVLAAASAS.

The protein belongs to the protease inhibitor I6 (cereal trypsin/alpha-amylase inhibitor) family.

It is found in the secreted. This is Trypsin/alpha-amylase inhibitor CMX2 from Triticum aestivum (Wheat).